A 187-amino-acid polypeptide reads, in one-letter code: Elongation factor P (187 aa).

Belongs to the elongation factor P family.

It localises to the cytoplasm. It participates in protein biosynthesis; polypeptide chain elongation. Involved in peptide bond synthesis. Stimulates efficient translation and peptide-bond synthesis on native or reconstituted 70S ribosomes in vitro. Probably functions indirectly by altering the affinity of the ribosome for aminoacyl-tRNA, thus increasing their reactivity as acceptors for peptidyl transferase. This Brachyspira hyodysenteriae (strain ATCC 49526 / WA1) protein is Elongation factor P.